We begin with the raw amino-acid sequence, 269 residues long: Staphylococcal secretory antigen ssaA2 (269 aa).

An N-terminal signal peptide occupies residues 1–27 (MKKIATATIATAGFATIAIASGNQAHA). 7 tandem repeats follow at residues 83-85 (YNN), 88-90 (YNN), 91-93 (YNN), 97-99 (YNN), 103-105 (YNN), 106-108 (YSN), and 115-117 (YNN). A 7 X 3 AA repeats of Y-[NS]-N region spans residues 83–115 (YNNYNYNNYNNGYSYNNYSRYNNYSNNNQSYNY). In terms of domain architecture, Peptidase C51 spans 148–269 (MAPSSNGRSI…SQAAGYNFIH (122 aa)).

Its subcellular location is the secreted. Not known; immunogenic protein. In Staphylococcus aureus (strain MSSA476), this protein is Staphylococcal secretory antigen ssaA2 (ssaA2).